A 114-amino-acid chain; its full sequence is uncharacterized protein (114 aa).

One can recognise an ABM domain in the interval 13–99 (YYAVIFSSVK…VWYESYAVRV (87 aa)).

This is an uncharacterized protein from Bacillus subtilis (strain 168).